The following is a 538-amino-acid chain: Atos homolog protein B (538 aa).

4 disordered regions span residues 1-103 (MRHV…GLVS), 130-149 (GSAT…PSSN), 163-185 (PDQG…QLHT), and 199-272 (KSPV…LGCP). Residues 130–148 (GSATSSWTSGTQSTPWPSS) are compositionally biased toward low complexity. Over residues 227 to 238 (HTPPGPGPPGPC) the composition is skewed to pro residues. A phosphoserine mark is found at S254 and S255. Residues 348-430 (LLGNFEESLL…VPKVGTIQVT (83 aa)) are required for macropage invasion. A transactivation domain 1 (TAD1) region spans residues 436 to 444 (QTVVKMFLV).

Belongs to the ATOS family.

Its subcellular location is the nucleus. Its function is as follows. Transcription regulator that may syncronize transcriptional and translational programs. In Rattus norvegicus (Rat), this protein is Atos homolog protein B.